We begin with the raw amino-acid sequence, 475 residues long: Putative aldehyde dehydrogenase (475 aa).

NAD(+) is bound by residues 146–147 (WN) and 223–224 (GS). The Proton acceptor role is filled by Glu-245. Residue Leu-246 participates in NAD(+) binding. Cys-279 functions as the Nucleophile in the catalytic mechanism. Glu-379 serves as a coordination point for NAD(+).

Belongs to the aldehyde dehydrogenase family.

It carries out the reaction an aldehyde + NAD(+) + H2O = a carboxylate + NADH + 2 H(+). The polypeptide is Putative aldehyde dehydrogenase (Staphylococcus aureus (strain MSSA476)).